The following is a 499-amino-acid chain: UPF0159 protein Ta1429 (499 aa).

ThyX domains follow at residues 1–246 (MIDR…ALSQ) and 271–476 (EKVR…IKFV).

It belongs to the UPF0159 family.

The protein is UPF0159 protein Ta1429 of Thermoplasma acidophilum (strain ATCC 25905 / DSM 1728 / JCM 9062 / NBRC 15155 / AMRC-C165).